The primary structure comprises 153 residues: UPF0178 protein Sfum_1097 (153 aa).

It belongs to the UPF0178 family.

The chain is UPF0178 protein Sfum_1097 from Syntrophobacter fumaroxidans (strain DSM 10017 / MPOB).